The sequence spans 100 residues: Urease subunit gamma (100 aa).

The protein belongs to the urease gamma subunit family. As to quaternary structure, heterotrimer of UreA (gamma), UreB (beta) and UreC (alpha) subunits. Three heterotrimers associate to form the active enzyme.

It localises to the cytoplasm. The catalysed reaction is urea + 2 H2O + H(+) = hydrogencarbonate + 2 NH4(+). It participates in nitrogen metabolism; urea degradation; CO(2) and NH(3) from urea (urease route): step 1/1. The protein is Urease subunit gamma of Shewanella halifaxensis (strain HAW-EB4).